A 1035-amino-acid chain; its full sequence is Retinoblastoma-related protein (1035 aa).

The disordered stretch occupies residues 403-426; it reads ITSPLSPHRSPASHANGIPGSANS. The tract at residues 431-632 is domain A; the sequence is TPVSTAMTTA…EKGSSLYNSL (202 aa). Residues 431 to 885 are pocket; it reads TPVSTAMTTA…NEIFIPAAKP (455 aa). The interval 633-753 is spacer; sequence TVARPALSAE…PGGGGETCAE (121 aa). Disordered regions lie at residues 674-697 and 721-748; these read PSLQ…PKRP and GNLK…GGGG. The tract at residues 754 to 885 is domain B; that stretch reads TGINVFFTKI…NEIFIPAAKP (132 aa).

This sequence belongs to the retinoblastoma protein (RB) family.

Its subcellular location is the nucleus. Functionally, regulator of biological processes that recruits a histone deacetylase to control gene transcription. May play a role in the entry into mitosis, negatively regulating the cell proliferation. Formation of stable complexes with geminiviridae replication-associated proteins may create a cellular environment which favors viral DNA replication. The sequence is that of Retinoblastoma-related protein (RBL901) from Populus trichocarpa (Western balsam poplar).